Consider the following 220-residue polypeptide: U1 small nuclear ribonucleoprotein C (220 aa).

The Matrin-type zinc-finger motif lies at 4 to 36; the sequence is YYCDYCDIYLTHDSMNARKAHNSGRNHVANVRD. 2 stretches are compositionally biased toward pro residues: residues 88–130 and 147–165; these read PGPP…PFLP and PPFP…PFRP. The segment at 88–220 is disordered; sequence PGPPPPGAFP…HPDRLRMLGQ (133 aa). Positions 166–200 are enriched in low complexity; the sequence is PMGMGMPPAPAQAQAQGSPMGMPQQGQQGTFTPTQ. Residues 211–220 are compositionally biased toward basic and acidic residues; sequence HPDRLRMLGQ.

Belongs to the U1 small nuclear ribonucleoprotein C family. In terms of assembly, U1 snRNP is composed of the 7 core Sm proteins B/B', D1, D2, D3, E, F and G that assemble in a heptameric protein ring on the Sm site of the small nuclear RNA to form the core snRNP, and at least 3 U1 snRNP-specific proteins U1-70K, U1-A and U1-C. U1-C interacts with U1 snRNA and the 5' splice-site region of the pre-mRNA.

The protein resides in the nucleus. Its function is as follows. Component of the spliceosomal U1 snRNP, which is essential for recognition of the pre-mRNA 5' splice-site and the subsequent assembly of the spliceosome. U1-C is directly involved in initial 5' splice-site recognition for both constitutive and regulated alternative splicing. The interaction with the 5' splice-site seems to precede base-pairing between the pre-mRNA and the U1 snRNA. Stimulates commitment or early (E) complex formation by stabilizing the base pairing of the 5' end of the U1 snRNA and the 5' splice-site region. The protein is U1 small nuclear ribonucleoprotein C of Cryptococcus neoformans var. neoformans serotype D (strain JEC21 / ATCC MYA-565) (Filobasidiella neoformans).